The primary structure comprises 341 residues: Very-long-chain 3-oxoacyl-CoA reductase (341 aa).

The chain crosses the membrane as a helical span at residues 22 to 42 (AVTGFLLVGIASFAAPLISTI). Residues Leu67, Asp123, Asp131, Asn150, Tyr217, Lys221, Val250, and Thr252 each contribute to the NADP(+) site. The active-site Proton donor is Tyr217. The Lowers pKa of active site Tyr role is filled by Lys221.

This sequence belongs to the short-chain dehydrogenases/reductases (SDR) family.

The protein localises to the endoplasmic reticulum membrane. The enzyme catalyses a very-long-chain (3R)-3-hydroxyacyl-CoA + NADP(+) = a very-long-chain 3-oxoacyl-CoA + NADPH + H(+). It participates in lipid metabolism; fatty acid biosynthesis. Its function is as follows. Component of the microsomal membrane bound fatty acid elongation system, which produces the 26-carbon very long-chain fatty acids (VLCFA) from palmitate. Catalyzes the reduction of the 3-ketoacyl-CoA intermediate that is formed in each cycle of fatty acid elongation. VLCFAs serve as precursors for ceramide and sphingolipids. This chain is Very-long-chain 3-oxoacyl-CoA reductase, found in Pyrenophora tritici-repentis (strain Pt-1C-BFP) (Wheat tan spot fungus).